The following is a 62-amino-acid chain: UPF0434 protein RHE_CH03977 (62 aa).

It belongs to the UPF0434 family.

The chain is UPF0434 protein RHE_CH03977 from Rhizobium etli (strain ATCC 51251 / DSM 11541 / JCM 21823 / NBRC 15573 / CFN 42).